Reading from the N-terminus, the 78-residue chain is DNA-directed RNA polymerase subunit Rpo5 (78 aa).

The protein belongs to the archaeal Rpo5/eukaryotic RPB5 RNA polymerase subunit family. Part of the RNA polymerase complex.

Its subcellular location is the cytoplasm. The enzyme catalyses RNA(n) + a ribonucleoside 5'-triphosphate = RNA(n+1) + diphosphate. Functionally, DNA-dependent RNA polymerase (RNAP) catalyzes the transcription of DNA into RNA using the four ribonucleoside triphosphates as substrates. The sequence is that of DNA-directed RNA polymerase subunit Rpo5 from Methanococcoides burtonii (strain DSM 6242 / NBRC 107633 / OCM 468 / ACE-M).